A 145-amino-acid polypeptide reads, in one-letter code: Basic phospholipase A2 S6-45 (145 aa).

The first 19 residues, 1 to 19 (MYPAHLLVLLAVCVSLLGA), serve as a signal peptide directing secretion. Residues 20-27 (SDIPPQPL) constitute a propeptide that is removed on maturation. 7 disulfides stabilise this stretch: cysteine 38–cysteine 99, cysteine 54–cysteine 144, cysteine 56–cysteine 72, cysteine 71–cysteine 127, cysteine 78–cysteine 120, cysteine 88–cysteine 113, and cysteine 106–cysteine 118. Positions 55, 57, and 59 each coordinate Ca(2+). The active site involves histidine 75. Aspartate 76 contacts Ca(2+). Aspartate 121 is a catalytic residue.

The protein belongs to the phospholipase A2 family. Group I subfamily. D49 sub-subfamily. It depends on Ca(2+) as a cofactor. As to expression, expressed by the venom gland.

The protein localises to the secreted. The catalysed reaction is a 1,2-diacyl-sn-glycero-3-phosphocholine + H2O = a 1-acyl-sn-glycero-3-phosphocholine + a fatty acid + H(+). Snake venom phospholipase A2 (PLA2) that inhibits collagen-induced platelet aggregation. PLA2 catalyzes the calcium-dependent hydrolysis of the 2-acyl groups in 3-sn-phosphoglycerides. The sequence is that of Basic phospholipase A2 S6-45 from Austrelaps superbus (Lowland copperhead snake).